Consider the following 342-residue polypeptide: Anthranilate phosphoribosyltransferase (342 aa).

Residues glycine 83, 86-87 (GD), threonine 91, 93-96 (NIST), 111-119 (KHGNRGVSS), and serine 123 each bind 5-phospho-alpha-D-ribose 1-diphosphate. Glycine 83 contributes to the anthranilate binding site. Serine 95 is a binding site for Mg(2+). Residue asparagine 114 coordinates anthranilate. Position 169 (arginine 169) interacts with anthranilate. Residues aspartate 228 and glutamate 229 each contribute to the Mg(2+) site.

This sequence belongs to the anthranilate phosphoribosyltransferase family. As to quaternary structure, homodimer. The cofactor is Mg(2+).

The catalysed reaction is N-(5-phospho-beta-D-ribosyl)anthranilate + diphosphate = 5-phospho-alpha-D-ribose 1-diphosphate + anthranilate. It functions in the pathway amino-acid biosynthesis; L-tryptophan biosynthesis; L-tryptophan from chorismate: step 2/5. Its function is as follows. Catalyzes the transfer of the phosphoribosyl group of 5-phosphorylribose-1-pyrophosphate (PRPP) to anthranilate to yield N-(5'-phosphoribosyl)-anthranilate (PRA). The polypeptide is Anthranilate phosphoribosyltransferase (Paraburkholderia phymatum (strain DSM 17167 / CIP 108236 / LMG 21445 / STM815) (Burkholderia phymatum)).